Reading from the N-terminus, the 197-residue chain is Secreted RxLR effector protein 48 (197 aa).

Residues 1–27 (MCCVSWNWVLACTFLLIFLSWWNCCND) form the signal peptide. The RxLR-dEER signature appears at 58-79 (RLLRVNLAANAEVLTHEIEEEK).

Belongs to the RxLR effector family.

It localises to the secreted. The protein resides in the host nucleus. Its subcellular location is the host cytoplasm. Secreted effector that completely suppresses the host cell death induced by cell death-inducing proteins. The protein is Secreted RxLR effector protein 48 of Plasmopara viticola (Downy mildew of grapevine).